A 148-amino-acid chain; its full sequence is Methylglyoxal synthase (148 aa).

The region spanning 4 to 148 (VSVPAIKRIV…LSYNTKVKKD (145 aa)) is the MGS-like domain. Residues H17, K21, 43-46 (TGTT), and 63-64 (SG) contribute to the substrate site. D69 serves as the catalytic Proton donor/acceptor. A substrate-binding site is contributed by H96.

This sequence belongs to the methylglyoxal synthase family.

It catalyses the reaction dihydroxyacetone phosphate = methylglyoxal + phosphate. Catalyzes the formation of methylglyoxal from dihydroxyacetone phosphate. This is Methylglyoxal synthase from Leptospira interrogans serogroup Icterohaemorrhagiae serovar copenhageni (strain Fiocruz L1-130).